The sequence spans 446 residues: N-succinylarginine dihydrolase (446 aa).

Substrate contacts are provided by residues 19 to 28, N110, and 137 to 138; these read AGLSFGNVAS and HR. Residue E174 is part of the active site. Residue R213 participates in substrate binding. The active site involves H249. 2 residues coordinate substrate: D251 and N364. The active-site Nucleophile is C370.

This sequence belongs to the succinylarginine dihydrolase family. As to quaternary structure, homodimer.

It catalyses the reaction N(2)-succinyl-L-arginine + 2 H2O + 2 H(+) = N(2)-succinyl-L-ornithine + 2 NH4(+) + CO2. It participates in amino-acid degradation; L-arginine degradation via AST pathway; L-glutamate and succinate from L-arginine: step 2/5. In terms of biological role, catalyzes the hydrolysis of N(2)-succinylarginine into N(2)-succinylornithine, ammonia and CO(2). The polypeptide is N-succinylarginine dihydrolase (Burkholderia lata (strain ATCC 17760 / DSM 23089 / LMG 22485 / NCIMB 9086 / R18194 / 383)).